The sequence spans 961 residues: Alanine--tRNA ligase, chloroplastic/mitochondrial (961 aa).

Residues His641, His645, Cys743, and His747 each coordinate Zn(2+).

Belongs to the class-II aminoacyl-tRNA synthetase family. In terms of assembly, monomer. Requires Zn(2+) as cofactor.

It is found in the plastid. The protein resides in the chloroplast. The protein localises to the mitochondrion. The enzyme catalyses tRNA(Ala) + L-alanine + ATP = L-alanyl-tRNA(Ala) + AMP + diphosphate. Functionally, catalyzes the attachment of alanine to tRNA(Ala) in a two-step reaction: alanine is first activated by ATP to form Ala-AMP and then transferred to the acceptor end of tRNA(Ala). Also edits incorrectly charged tRNA(Ala) via its editing domain. In Sorghum bicolor (Sorghum), this protein is Alanine--tRNA ligase, chloroplastic/mitochondrial.